We begin with the raw amino-acid sequence, 207 residues long: Thiamine-phosphate synthase (207 aa).

Residues 35–39 (QYRDK) and N67 contribute to the 4-amino-2-methyl-5-(diphosphooxymethyl)pyrimidine site. Positions 68 and 86 each coordinate Mg(2+). Residue T105 participates in 4-amino-2-methyl-5-(diphosphooxymethyl)pyrimidine binding. 132 to 134 (SVT) serves as a coordination point for 2-[(2R,5Z)-2-carboxy-4-methylthiazol-5(2H)-ylidene]ethyl phosphate. Residue K135 participates in 4-amino-2-methyl-5-(diphosphooxymethyl)pyrimidine binding. G162 is a 2-[(2R,5Z)-2-carboxy-4-methylthiazol-5(2H)-ylidene]ethyl phosphate binding site.

The protein belongs to the thiamine-phosphate synthase family. Requires Mg(2+) as cofactor.

It carries out the reaction 2-[(2R,5Z)-2-carboxy-4-methylthiazol-5(2H)-ylidene]ethyl phosphate + 4-amino-2-methyl-5-(diphosphooxymethyl)pyrimidine + 2 H(+) = thiamine phosphate + CO2 + diphosphate. It catalyses the reaction 2-(2-carboxy-4-methylthiazol-5-yl)ethyl phosphate + 4-amino-2-methyl-5-(diphosphooxymethyl)pyrimidine + 2 H(+) = thiamine phosphate + CO2 + diphosphate. The enzyme catalyses 4-methyl-5-(2-phosphooxyethyl)-thiazole + 4-amino-2-methyl-5-(diphosphooxymethyl)pyrimidine + H(+) = thiamine phosphate + diphosphate. It participates in cofactor biosynthesis; thiamine diphosphate biosynthesis; thiamine phosphate from 4-amino-2-methyl-5-diphosphomethylpyrimidine and 4-methyl-5-(2-phosphoethyl)-thiazole: step 1/1. In terms of biological role, condenses 4-methyl-5-(beta-hydroxyethyl)thiazole monophosphate (THZ-P) and 2-methyl-4-amino-5-hydroxymethyl pyrimidine pyrophosphate (HMP-PP) to form thiamine monophosphate (TMP). The chain is Thiamine-phosphate synthase from Pseudomonas putida (strain ATCC 700007 / DSM 6899 / JCM 31910 / BCRC 17059 / LMG 24140 / F1).